We begin with the raw amino-acid sequence, 379 residues long: Chaperone protein DnaJ (379 aa).

Positions 5–69 (EFYDRLGVSK…QKRAAYDQYG (65 aa)) constitute a J domain. The segment at 135–217 (GAEKEVSYNR…CHGTGHEKKT (83 aa)) adopts a CR-type zinc-finger fold. Zn(2+) is bound by residues Cys148, Cys151, Cys165, Cys168, Cys191, Cys194, Cys205, and Cys208. CXXCXGXG motif repeat units follow at residues 148-155 (CHTCSGSG), 165-172 (CQKCHGSG), 191-198 (CDVCQGSG), and 205-212 (CPTCHGTG).

Belongs to the DnaJ family. In terms of assembly, homodimer. It depends on Zn(2+) as a cofactor.

The protein resides in the cytoplasm. Participates actively in the response to hyperosmotic and heat shock by preventing the aggregation of stress-denatured proteins and by disaggregating proteins, also in an autonomous, DnaK-independent fashion. Unfolded proteins bind initially to DnaJ; upon interaction with the DnaJ-bound protein, DnaK hydrolyzes its bound ATP, resulting in the formation of a stable complex. GrpE releases ADP from DnaK; ATP binding to DnaK triggers the release of the substrate protein, thus completing the reaction cycle. Several rounds of ATP-dependent interactions between DnaJ, DnaK and GrpE are required for fully efficient folding. Also involved, together with DnaK and GrpE, in the DNA replication of plasmids through activation of initiation proteins. This is Chaperone protein DnaJ from Streptococcus agalactiae serotype III (strain NEM316).